We begin with the raw amino-acid sequence, 165 residues long: Endoribonuclease YbeY (165 aa).

Residues His130, His134, and His140 each coordinate Zn(2+).

Belongs to the endoribonuclease YbeY family. The cofactor is Zn(2+).

It localises to the cytoplasm. Functionally, single strand-specific metallo-endoribonuclease involved in late-stage 70S ribosome quality control and in maturation of the 3' terminus of the 16S rRNA. This chain is Endoribonuclease YbeY, found in Streptococcus pyogenes serotype M28 (strain MGAS6180).